Here is a 412-residue protein sequence, read N- to C-terminus: Carboxypeptidase B1 (412 aa).

The signal sequence occupies residues 1-18 (MIPRIVVVLLSVLAVVTA). Positions 19-75 (RRSYEGYKVYGIVPESPDEAEILYQIRQSNPDLDFWHLTKQPGDEARVLVAPKDQRS) are cleaved as a propeptide — activation peptide. Residues 118–408 (SYLRHNEINE…VGIKAMALKV (291 aa)) enclose the Peptidase M14 domain. Zn(2+) is bound by residues His-175 and Glu-178. Residue 175–178 (HARE) coordinates a peptide. An N-linked (GlcNAc...) asparagine glycan is attached at Asn-205. Residues Arg-230 and 246 to 247 (NR) contribute to the a peptide site. Cys-240 and Cys-263 are joined by a disulfide. A Zn(2+)-binding site is contributed by His-299. A peptide-binding positions include 300–301 (SY) and Tyr-351. Glu-374 serves as the catalytic Proton donor/acceptor. Asn-395 is a glycosylation site (N-linked (GlcNAc...) asparagine).

The protein belongs to the peptidase M14 family. Monomer. Interacts with Dengue virus type 2 (DENV2, MY89-88549 strain) envelope protein E. Interacts with Dengue virus envelope protein E type 3, type 2, type 4 and type 1 with decreasing strength. Zn(2+) serves as cofactor. Expressed in midgut (at protein level).

The protein localises to the endoplasmic reticulum. It carries out the reaction Preferential release of a C-terminal lysine or arginine amino acid.. Inhibited by S.tuberosum metallocarboxypeptidase inhibitor. Its function is as follows. Carboxypeptidase that preferentially hydrolyzes arginine and lysine residues at the C-terminus. During infection by dengue virus, may play a role in preventing viral packaging, maturation, and release from the midgut. The polypeptide is Carboxypeptidase B1 (Aedes aegypti (Yellowfever mosquito)).